The following is a 200-amino-acid chain: Insulin, isoform 2 (200 aa).

The interval 148–200 is disordered; the sequence is EVDSSPQPQGSESLPAQPPAQPAPQPEPQQAREPSPEVSCCGLWPRRPQRSQN. The span at 163–174 shows a compositional bias: pro residues; sequence AQPPAQPAPQPE. A compositionally biased stretch (low complexity) spans 175-184; that stretch reads PQQAREPSPE.

In terms of tissue distribution, expressed in pancreas, eye and, to a lower extent, in limb.

The sequence is that of Insulin, isoform 2 (INS-IGF2) from Homo sapiens (Human).